Consider the following 255-residue polypeptide: DASH complex subunit SPC34 (255 aa).

Residues 53 to 81 form a disordered region; sequence LFSVPPPPPRQTTLTAEQQQQQKPSNRRQ. Polar residues predominate over residues 63–81; sequence QTTLTAEQQQQQKPSNRRQ. A coiled-coil region spans residues 176 to 248; the sequence is LAYYEAKIAE…QARLRALDAD (73 aa).

The protein belongs to the DASH complex SPC34 family. As to quaternary structure, component of the DASH complex consisting of ASK1, DAD1, DAD2, DAD3, DAD4, DAM1, DUO1, HSK3, SPC19 and SPC34, with a stoichiometry of one copy of each subunit per complex. Multiple DASH complexes oligomerize to form a ring that encircles spindle microtubules and organizes the rod-like NDC80 complexes of the outer kinetochore of the outer kinetochore. DASH complex oligomerization strengthens microtubule attachments. On cytoplasmic microtubules, DASH complexes appear to form patches instead of rings.

Its subcellular location is the nucleus. The protein localises to the cytoplasm. It is found in the cytoskeleton. It localises to the spindle. The protein resides in the chromosome. Its subcellular location is the centromere. The protein localises to the kinetochore. Its function is as follows. Component of the DASH complex that connects microtubules with kinetochores and couples microtubule depolymerisation to chromosome movement; it is involved in retrieving kinetochores to the spindle poles before their re-orientation on the spindle in early mitosis and allows microtubule depolymerization to pull chromosomes apart and resist detachment during anaphase. Kinetochores, consisting of a centromere-associated inner segment and a microtubule-contacting outer segment, play a crucial role in chromosome segregation by mediating the physical connection between centromeric DNA and microtubules. Kinetochores also serve as an input point for the spindle assembly checkpoint, which delays anaphase until all chromosomes have bioriented on the mitotic spindle. In Chaetomium thermophilum (strain DSM 1495 / CBS 144.50 / IMI 039719) (Thermochaetoides thermophila), this protein is DASH complex subunit SPC34.